Consider the following 251-residue polypeptide: Aspartate/glutamate leucyltransferase (251 aa).

This sequence belongs to the R-transferase family. Bpt subfamily.

The protein localises to the cytoplasm. The enzyme catalyses N-terminal L-glutamyl-[protein] + L-leucyl-tRNA(Leu) = N-terminal L-leucyl-L-glutamyl-[protein] + tRNA(Leu) + H(+). The catalysed reaction is N-terminal L-aspartyl-[protein] + L-leucyl-tRNA(Leu) = N-terminal L-leucyl-L-aspartyl-[protein] + tRNA(Leu) + H(+). In terms of biological role, functions in the N-end rule pathway of protein degradation where it conjugates Leu from its aminoacyl-tRNA to the N-termini of proteins containing an N-terminal aspartate or glutamate. The polypeptide is Aspartate/glutamate leucyltransferase (Xanthomonas axonopodis pv. citri (strain 306)).